We begin with the raw amino-acid sequence, 279 residues long: 4-hydroxy-3-methylbut-2-enyl diphosphate reductase (279 aa).

Cysteine 12 provides a ligand contact to [4Fe-4S] cluster. 2 residues coordinate (2E)-4-hydroxy-3-methylbut-2-enyl diphosphate: histidine 41 and histidine 74. Positions 41 and 74 each coordinate dimethylallyl diphosphate. Positions 41 and 74 each coordinate isopentenyl diphosphate. Cysteine 96 contributes to the [4Fe-4S] cluster binding site. Histidine 124 serves as a coordination point for (2E)-4-hydroxy-3-methylbut-2-enyl diphosphate. Histidine 124 serves as a coordination point for dimethylallyl diphosphate. Residue histidine 124 coordinates isopentenyl diphosphate. The Proton donor role is filled by glutamate 126. A (2E)-4-hydroxy-3-methylbut-2-enyl diphosphate-binding site is contributed by threonine 164. Cysteine 192 serves as a coordination point for [4Fe-4S] cluster. Residues serine 220, serine 221, asparagine 222, and serine 263 each coordinate (2E)-4-hydroxy-3-methylbut-2-enyl diphosphate. The dimethylallyl diphosphate site is built by serine 220, serine 221, asparagine 222, and serine 263. Isopentenyl diphosphate contacts are provided by serine 220, serine 221, asparagine 222, and serine 263.

The protein belongs to the IspH family. It depends on [4Fe-4S] cluster as a cofactor.

The catalysed reaction is isopentenyl diphosphate + 2 oxidized [2Fe-2S]-[ferredoxin] + H2O = (2E)-4-hydroxy-3-methylbut-2-enyl diphosphate + 2 reduced [2Fe-2S]-[ferredoxin] + 2 H(+). The enzyme catalyses dimethylallyl diphosphate + 2 oxidized [2Fe-2S]-[ferredoxin] + H2O = (2E)-4-hydroxy-3-methylbut-2-enyl diphosphate + 2 reduced [2Fe-2S]-[ferredoxin] + 2 H(+). It functions in the pathway isoprenoid biosynthesis; dimethylallyl diphosphate biosynthesis; dimethylallyl diphosphate from (2E)-4-hydroxy-3-methylbutenyl diphosphate: step 1/1. Its pathway is isoprenoid biosynthesis; isopentenyl diphosphate biosynthesis via DXP pathway; isopentenyl diphosphate from 1-deoxy-D-xylulose 5-phosphate: step 6/6. In terms of biological role, catalyzes the conversion of 1-hydroxy-2-methyl-2-(E)-butenyl 4-diphosphate (HMBPP) into a mixture of isopentenyl diphosphate (IPP) and dimethylallyl diphosphate (DMAPP). Acts in the terminal step of the DOXP/MEP pathway for isoprenoid precursor biosynthesis. In Clostridioides difficile (strain 630) (Peptoclostridium difficile), this protein is 4-hydroxy-3-methylbut-2-enyl diphosphate reductase.